The chain runs to 994 residues: Chloride channel protein 1 (994 aa).

The Cytoplasmic portion of the chain corresponds to 1-118 (MERSQSQRHG…VLRRKLGEDW (118 aa)). Residues 119 to 150 (IFLVLLGLLMALVSWCMDYVSAKSLQAYKWTY) form a helical membrane-spanning segment. The Extracellular segment spans residues 151–158 (AQMKPSLP). Residues 159 to 179 (LQYLAWVTFPLILILFSALFC) form a helical membrane-spanning segment. Residues 180–183 (QLIS) lie on the Cytoplasmic side of the membrane. Residues 184–189 (PQAVGS) constitute an intramembrane region (note=Loop between two helices). The Selectivity filter part_1 motif lies at 188-192 (GSGIP). S189 lines the chloride pocket. The segment at residues 190 to 195 (GIPEMK) is an intramembrane region (helical). Over 196-208 (TILRGVVLKEYLT) the chain is Cytoplasmic. The segment at residues 209–224 (LKAFVAKVVALTAGLG) is an intramembrane region (helical). Positions 225 to 230 (SGIPVG) form an intramembrane region, note=Loop between two helices. Positions 230 to 234 (GKEGP) match the Selectivity filter part_2 motif. Positions 231–246 (KEGPFVHIASICAAVL) form an intramembrane region, helical. The Cytoplasmic portion of the chain corresponds to 247–268 (SKFMSMFSGVYEQPYYYTDILT). 2 intramembrane regions (helical) span residues 269–280 (VGCAVGVGCCFG) and 281–290 (TPLGGVLFSI). The Cytoplasmic segment spans residues 291–301 (EVTSTYFAVRN). The helical transmembrane segment at 302–321 (YWRGFFAATFSAFVFRVLAV) threads the bilayer. At 322-347 (WNKDAVTITALFRTNFRMDFPFDLKE) the chain is on the extracellular side. Residues 348–376 (LPAFAVIGICCGFLGAVFVYLHRQVMLGV) traverse the membrane as a helical segment. Over 377 to 390 (RKHKCLSQFLAKHR) the chain is Cytoplasmic. The chain crosses the membrane as a helical span at residues 391–408 (LLYPGIVTFVIASLTFPP). The Extracellular segment spans residues 409–414 (GMGQFM). An intramembrane region (note=Loop between two helices) is located at residues 415 to 418 (AGEL). The helical intramembrane region spans 419–426 (MPREAIST). Residues 427–457 (LFDNNTWVKHIGDPQSLGQSAVWLHPQVNVI) are Extracellular-facing. An intramembrane region (helical) is located at residues 458–475 (IIILLFFVMKFWMSIVAT). An intramembrane region (note=Loop between two helices) is located at residues 476–482 (TMPIPCG). Positions 482–486 (GGFMP) match the Selectivity filter part_3 motif. An intramembrane region (helical) is located at residues 483–498 (GFMPVFVLGAAFGRLV). Position 484 (F484) interacts with chloride. Topologically, residues 499-521 (GEIMAMLFPEGILFDDIIYKILP) are extracellular. An intramembrane region (helical) is located at residues 522-538 (GGYAVIGAAALTGAVSH). Residues 539–540 (TV) constitute an intramembrane region (note=Loop between two helices). Residues 541–554 (STAVICFELTGQIA) constitute an intramembrane region (helical). The Extracellular segment spans residues 555–557 (HIL). The helical intramembrane region spans 558–571 (PMMVAVILANMVAQ). An intramembrane region (note=Loop between two helices) is located at residues 572-575 (SLQP). Positions 576–578 (SLY) form an intramembrane region, helical. Y578 contacts chloride. The Cytoplasmic portion of the chain corresponds to 579-994 (DSIIQVKKLP…DEEDEDELIL (416 aa)). In terms of domain architecture, CBS 1 spans 609-668 (MVRDVKFVSASCTYGELRNLLQATTVKTLPLVDSKDSMILLGSVERSELQSLLQRHLCAE). The tract at residues 710 to 770 (EDEDEDLSRK…PEASDSADQR (61 aa)) is disordered. Residues 725–739 (TPAPPPPSPPPPPSQ) are compositionally biased toward pro residues. The region spanning 827 to 882 (IDQSPFQLVEQTTLHKTHTLFSLLGLHLAYVTSMGKLRGVLALEELQKAIEGHTKS) is the CBS 2 domain. 2 disordered regions span residues 886–954 (LRPP…ARAE) and 971–994 (ELADILHGPSLRSTDEEDEDELIL). S892 is modified (phosphoserine). Over residues 933–943 (PETPVPPPSPE) the composition is skewed to pro residues. Residues 985 to 994 (DEEDEDELIL) show a composition bias toward acidic residues.

The protein belongs to the chloride channel (TC 2.A.49) family. ClC-1/CLCN1 subfamily. As to quaternary structure, homodimer. In terms of tissue distribution, predominantly expressed in skeletal muscles.

The protein localises to the cell membrane. It is found in the sarcolemma. It localises to the T-tubule. It carries out the reaction chloride(in) = chloride(out). The catalysed reaction is thiocyanate(in) = thiocyanate(out). It catalyses the reaction bromide(in) = bromide(out). The enzyme catalyses nitrate(in) = nitrate(out). It carries out the reaction iodide(out) = iodide(in). With respect to regulation, modulated by membrane voltage with depolarization favouring channel opening and hyperpolarization favouring channel closure. Inhibited by acidic pH and ATP binding due to a shift of voltage dependence of common gating to more positive voltages. Inhibited by 9-anthracene-carboxylic. Voltage-gated chloride channel involved in skeletal muscle excitability. Generates most of the plasma membrane chloride conductance in skeletal muscle fibers, stabilizes the resting membrane potential and contributes to the repolarization phase during action potential firing. Forms a homodimeric channel where each subunit has its own ion conduction pathway. Conducts double-barreled currents controlled by two types of gates, two fast glutamate gates that control each subunit independently and a slow common gate that opens and shuts off both subunits simultaneously. Has a significant open probability at muscle resting potential and is further activated upon membrane depolarization. Permeable to small monovalent anions with ion selectivity for chloride &gt; thiocyanate &gt; bromide &gt; nitrate &gt; iodide. In Mus musculus (Mouse), this protein is Chloride channel protein 1 (Clcn1).